A 457-amino-acid chain; its full sequence is Heme sensor protein HssS (457 aa).

A run of 2 helical transmembrane segments spans residues 9–29 (IAIYSITVILFSALISFVLTN) and 164–184 (TFLAVLLMLLLFISISLVIAS). Residues 186 to 238 (YSIIRPVKKLKLATERLIDGDFETPIKQTRKDEIGTLQYHFNKMRESLGQVDQ) enclose the HAMP domain. In terms of domain architecture, Histidine kinase spans 246–456 (NVSHEIKTPL…TFTITLPNNS (211 aa)). Position 249 is a phosphohistidine; by autocatalysis (H249).

Post-translationally, autophosphorylated.

It is found in the cell membrane. The catalysed reaction is ATP + protein L-histidine = ADP + protein N-phospho-L-histidine.. Functionally, member of the two-component regulatory system HssS/HssR involved in intracellular heme homeostasis and tempering of staphylococcal virulence. HssS functions as a heme sensor histidine kinase which is autophosphorylated at a histidine residue and transfers its phosphate group to an aspartate residue of HssR. HssR/HssS activates the expression of hrtAB, an efflux pump, in response to extracellular heme, hemin, hemoglobin or blood. This Staphylococcus aureus (strain Mu3 / ATCC 700698) protein is Heme sensor protein HssS (hssS).